Reading from the N-terminus, the 254-residue chain is Phosphoribosylaminoimidazole-succinocarboxamide synthase (254 aa).

The protein belongs to the SAICAR synthetase family.

The enzyme catalyses 5-amino-1-(5-phospho-D-ribosyl)imidazole-4-carboxylate + L-aspartate + ATP = (2S)-2-[5-amino-1-(5-phospho-beta-D-ribosyl)imidazole-4-carboxamido]succinate + ADP + phosphate + 2 H(+). Its pathway is purine metabolism; IMP biosynthesis via de novo pathway; 5-amino-1-(5-phospho-D-ribosyl)imidazole-4-carboxamide from 5-amino-1-(5-phospho-D-ribosyl)imidazole-4-carboxylate: step 1/2. The polypeptide is Phosphoribosylaminoimidazole-succinocarboxamide synthase (Sinorhizobium fredii (strain NBRC 101917 / NGR234)).